The following is a 158-amino-acid chain: 2-C-methyl-D-erythritol 2,4-cyclodiphosphate synthase (158 aa).

A divalent metal cation is bound by residues Asp-9 and His-11. 4-CDP-2-C-methyl-D-erythritol 2-phosphate contacts are provided by residues Asp-9–His-11 and His-35–Ser-36. His-43 lines the a divalent metal cation pocket. 4-CDP-2-C-methyl-D-erythritol 2-phosphate-binding positions include Asp-57–Gly-59, Phe-62–Asp-66, Ala-101–Ala-107, Thr-133–Glu-136, Phe-140, and Arg-143.

It belongs to the IspF family. In terms of assembly, homotrimer. The cofactor is a divalent metal cation.

It catalyses the reaction 4-CDP-2-C-methyl-D-erythritol 2-phosphate = 2-C-methyl-D-erythritol 2,4-cyclic diphosphate + CMP. It functions in the pathway isoprenoid biosynthesis; isopentenyl diphosphate biosynthesis via DXP pathway; isopentenyl diphosphate from 1-deoxy-D-xylulose 5-phosphate: step 4/6. Involved in the biosynthesis of isopentenyl diphosphate (IPP) and dimethylallyl diphosphate (DMAPP), two major building blocks of isoprenoid compounds. Catalyzes the conversion of 4-diphosphocytidyl-2-C-methyl-D-erythritol 2-phosphate (CDP-ME2P) to 2-C-methyl-D-erythritol 2,4-cyclodiphosphate (ME-CPP) with a corresponding release of cytidine 5-monophosphate (CMP). In Geobacillus sp. (strain WCH70), this protein is 2-C-methyl-D-erythritol 2,4-cyclodiphosphate synthase.